Here is a 397-residue protein sequence, read N- to C-terminus: Stearoyl-[acyl-carrier-protein] 9-desaturase, chloroplastic (397 aa).

The transit peptide at 1-33 (MALNFNAIASKSQKLPCFALPPKATLRSPKFSM) directs the protein to the chloroplast. Fe cation is bound by residues glutamate 138, glutamate 176, histidine 179, glutamate 229, glutamate 262, and histidine 265.

It belongs to the fatty acid desaturase type 2 family. Homodimer. Requires Fe(2+) as cofactor.

It localises to the plastid. The protein localises to the chloroplast. The catalysed reaction is octadecanoyl-[ACP] + 2 reduced [2Fe-2S]-[ferredoxin] + O2 + 2 H(+) = (9Z)-octadecenoyl-[ACP] + 2 oxidized [2Fe-2S]-[ferredoxin] + 2 H2O. It participates in lipid metabolism; fatty acid metabolism. Functionally, converts stearoyl-ACP to oleoyl-ACP by introduction of a cis double bond between carbons 9 and 10 of the acyl chain. The sequence is that of Stearoyl-[acyl-carrier-protein] 9-desaturase, chloroplastic from Gossypium hirsutum (Upland cotton).